A 1283-amino-acid chain; its full sequence is uncharacterized protein (1283 aa).

Positions 10–46 constitute an LDL-receptor class A domain; sequence ACPPNTFTCADGSCIPSDWKGDGEKDCEDGSDEEAVT. Cystine bridges form between Cys11–Cys23 and Cys18–Cys36. Residues 27–47 form a disordered region; sequence DWKGDGEKDCEDGSDEEAVTG. The segment covering 34–45 has biased composition (acidic residues); that stretch reads KDCEDGSDEEAV. An N-linked (GlcNAc...) asparagine glycan is attached at Asn79. The disordered stretch occupies residues 236-278; sequence STTLIVDETTESTSASAEDDDDDVLTTNTSEESTATTAHDEEV. The segment covering 261-272 has biased composition (low complexity); that stretch reads TTNTSEESTATT. Positions 332–389 form a coiled coil; the sequence is YQKTLEKEKCAIRNATSKCEALISYNNNLDCAIVTMNDECEVDAQNLVVELQEEVNDL. Disordered stretches follow at residues 621-651 and 1005-1046; these read ARPT…VASS and SSST…PTDG. The span at 626–647 shows a compositional bias: pro residues; sequence VTMPPRAPTAKPLPIPSAPTPP. Residues 1005–1015 are compositionally biased toward low complexity; it reads SSSTMVSTSSE. A compositionally biased stretch (acidic residues) spans 1016–1026; that stretch reads SDSESAPEQET. Residues 1027–1044 are compositionally biased toward low complexity; that stretch reads EPTVPSTTETTESPSTPT. Residues 1263–1283 form a helical membrane-spanning segment; that stretch reads VQSSVSFHIILAALIPFFALF.

The protein resides in the membrane. This is an uncharacterized protein from Caenorhabditis elegans.